The chain runs to 103 residues: Large ribosomal subunit protein uL24 (103 aa).

This sequence belongs to the universal ribosomal protein uL24 family. Part of the 50S ribosomal subunit.

In terms of biological role, one of two assembly initiator proteins, it binds directly to the 5'-end of the 23S rRNA, where it nucleates assembly of the 50S subunit. One of the proteins that surrounds the polypeptide exit tunnel on the outside of the subunit. The protein is Large ribosomal subunit protein uL24 of Haemophilus influenzae (strain 86-028NP).